The following is a 20-amino-acid chain: Hemocyanin subunit II (20 aa).

The segment at 1 to 20 (DVVASSTAHKQQDINHLLDK) is disordered. The span at 10-20 (KQQDINHLLDK) shows a compositional bias: basic and acidic residues.

This sequence belongs to the tyrosinase family. Hemocyanin subfamily. In terms of assembly, composed of 3 major subunits (IB, II and III) and 1 minor subunit (IA) which form homohexamers and heterohexamers. May also form larger structures. In terms of tissue distribution, hemolymph.

Its subcellular location is the secreted. The protein localises to the extracellular space. Functionally, hemocyanins are copper-containing oxygen carriers occurring freely dissolved in the hemolymph of many mollusks and arthropods. In Panulirus japonicus (Japanese spiny lobster), this protein is Hemocyanin subunit II.